The following is a 209-amino-acid chain: Large ribosomal subunit protein bL25 (209 aa).

This sequence belongs to the bacterial ribosomal protein bL25 family. CTC subfamily. Part of the 50S ribosomal subunit; part of the 5S rRNA/L5/L18/L25 subcomplex. Contacts the 5S rRNA. Binds to the 5S rRNA independently of L5 and L18.

Its function is as follows. This is one of the proteins that binds to the 5S RNA in the ribosome where it forms part of the central protuberance. The sequence is that of Large ribosomal subunit protein bL25 from Xanthomonas campestris pv. campestris (strain B100).